We begin with the raw amino-acid sequence, 523 residues long: Succinate-semialdehyde dehydrogenase, mitochondrial (523 aa).

Residues 1–35 (MATCFLLRSFWAARPALPPPGRFRPEPAGTPRRSY) constitute a mitochondrion transit peptide. N6-acetyllysine is present on Lys-74. An N6-acetyllysine; alternate modification is found at Lys-114. An N6-succinyllysine; alternate modification is found at Lys-114. Residue Lys-123 is modified to N6-succinyllysine. Lys-128 carries the post-translational modification N6-acetyllysine. Lys-172 carries the post-translational modification N6-succinyllysine. Residues Arg-201 and 216–219 (KPAE) each bind NAD(+). Arg-201 contacts substrate. Residue Lys-253 is modified to N6-acetyllysine; alternate. At Lys-253 the chain carries N6-succinyllysine; alternate. Residue 272–277 (GSTATG) participates in NAD(+) binding. Glu-294 acts as the Proton acceptor in catalysis. Arg-322 is a binding site for substrate. The active-site Nucleophile is the Cys-328. Cys-328 and Cys-330 are oxidised to a cystine. The residue at position 347 (Lys-347) is an N6-acetyllysine; alternate. An N6-succinyllysine; alternate modification is found at Lys-347. The residue at position 353 (Lys-353) is an N6-acetyllysine. The residue at position 390 (Lys-390) is an N6-succinyllysine. An N6-acetyllysine modification is found at Lys-399. At Ser-403 the chain carries Phosphoserine. Ser-486 provides a ligand contact to substrate. Position 487 is a phosphoserine (Ser-487).

Belongs to the aldehyde dehydrogenase family. In terms of assembly, homotetramer.

The protein resides in the mitochondrion. The enzyme catalyses succinate semialdehyde + NAD(+) + H2O = succinate + NADH + 2 H(+). The protein operates within amino-acid degradation; 4-aminobutanoate degradation. Its activity is regulated as follows. Redox-regulated. Inhibited under oxydizing conditions. Its function is as follows. Catalyzes one step in the degradation of the inhibitory neurotransmitter gamma-aminobutyric acid (GABA). This Mus musculus (Mouse) protein is Succinate-semialdehyde dehydrogenase, mitochondrial (Aldh5a1).